We begin with the raw amino-acid sequence, 361 residues long: S-adenosylmethionine-dependent nucleotide dehydratase RSAD2 (361 aa).

Residues 69 to 289 form the Radical SAM core domain; it reads PTTPTSVNYH…LERHKEVSCL (221 aa). [4Fe-4S] cluster contacts are provided by Cys83, Cys87, and Cys90. Position 197 is an N6-acetyllysine (Lys197). Lys206 participates in a covalent cross-link: Glycyl lysine isopeptide (Lys-Gly) (interchain with G-Cter in ubiquitin).

This sequence belongs to the radical SAM superfamily. RSAD2 family. In terms of assembly, homodimer. Interacts with IRAK1 and TRAF6. Interacts with FPPS. Interacts with HADHB. Interacts (via C-terminus) with VAPA/VAP33 (via C-terminus). As to quaternary structure, (Microbial infection) Interacts with human cytomegalovirus/HHV-5 protein vMIA/UL37; this interaction results in RSAD2/viperin relocalization from the endoplasmic reticulum to the mitochondria. (Microbial infection) Interacts (via N-terminus) with enterovirus A71 protein 2C; this interaction inhibits viral replication. In terms of assembly, (Microbial infection) Interacts with herpes simplex virus 1/HHV-1 glycoprotein D; this interaction inhibits HHV-1 replication by facilitating IRF7-mediated IFN-beta production. It depends on [4Fe-4S] cluster as a cofactor. Acetylated by HAT1. HAT1-mediated acetylation of Lys-197 in turn recruits UBE4A that stimulates RSAD2 polyubiquitination leading to proteasomal degradation. In terms of processing, 'Lys-6'-linked polyubiquitination at Lys-206 leads to RSAD2 protein degradation.

It is found in the endoplasmic reticulum membrane. The protein resides in the golgi apparatus. The protein localises to the endoplasmic reticulum. It localises to the lipid droplet. Its subcellular location is the mitochondrion. It is found in the mitochondrion inner membrane. The protein resides in the mitochondrion outer membrane. It catalyses the reaction CTP + AH2 + S-adenosyl-L-methionine = 3'-deoxy-3',4'-didehydro-CTP + 5'-deoxyadenosine + L-methionine + A + H2O + H(+). IRAK1 and TRAF6 synergistically activate RSAD2 increasing its activity with CTP as substrate about 10-fold. Interferon-inducible antiviral protein which plays a major role in the cell antiviral state induced by type I and type II interferon. Catalyzes the conversion of cytidine triphosphate (CTP) to 3'-deoxy-3',4'-didehydro-CTP (ddhCTP) via a SAM-dependent radical mechanism. In turn, ddhCTP acts as a chain terminator for the RNA-dependent RNA polymerases from multiple viruses and directly inhibits viral replication. Therefore, inhibits a wide range of DNA and RNA viruses, including human cytomegalovirus (HCMV), hepatitis C virus (HCV), west Nile virus (WNV), dengue virus, sindbis virus, influenza A virus, sendai virus, vesicular stomatitis virus (VSV), zika virus, and human immunodeficiency virus (HIV-1). Also promotes TLR7 and TLR9-dependent production of IFN-beta production in plasmacytoid dendritic cells (pDCs) by facilitating 'Lys-63'-linked ubiquitination of IRAK1 by TRAF6. Plays a role in CD4+ T-cells activation and differentiation. Facilitates T-cell receptor (TCR)-mediated GATA3 activation and optimal T-helper 2 (Th2) cytokine production by modulating NFKB1 and JUNB activities. Can inhibit secretion of soluble proteins. In Homo sapiens (Human), this protein is S-adenosylmethionine-dependent nucleotide dehydratase RSAD2.